The chain runs to 391 residues: Mannose-6-phosphate isomerase (391 aa).

Zn(2+) contacts are provided by Gln-97, His-99, Glu-134, and His-255. Arg-274 is a catalytic residue. Lys-280 is subject to N6-acetyllysine.

It belongs to the mannose-6-phosphate isomerase type 1 family. The cofactor is Zn(2+).

It is found in the cytoplasm. The catalysed reaction is D-mannose 6-phosphate = D-fructose 6-phosphate. In terms of biological role, involved in the conversion of glucose to GDP-L-fucose, which can be converted to L-fucose, a capsular polysaccharide. This Shigella flexneri protein is Mannose-6-phosphate isomerase (manA).